We begin with the raw amino-acid sequence, 463 residues long: RuvB-like 2 (463 aa).

Residue alanine 2 is modified to N-acetylalanine. Lysine 9 is covalently cross-linked (Glycyl lysine isopeptide (Lys-Gly) (interchain with G-Cter in SUMO2)). Position 77-84 (77-84) interacts with ATP; it reads GQPGTGKT. At serine 437 the chain carries Phosphoserine. Residues lysine 444 and lysine 456 each participate in a glycyl lysine isopeptide (Lys-Gly) (interchain with G-Cter in SUMO2) cross-link.

Belongs to the RuvB family. In terms of assembly, forms homohexameric rings. Can form a dodecamer with RUVBL1 made of two stacked hexameric rings; however, even though RUVBL1 and RUVBL2 are present in equimolar ratio, the oligomeric status of each hexamer is not known. Oligomerization may regulate binding to nucleic acids and conversely, binding to nucleic acids may affect the dodecameric assembly. Interaction of the complex with DHX34 results in conformational changes of the N-terminus of the RUVBL2 subunits, resulting in loss of nucleotide binding ability and ATP hydrolysis of the complex. Interacts with the transcriptional activation domain of MYC. Interacts with ATF2. Component of the RNA polymerase II holoenzyme complex. May also act to bridge the LEF1/TCF1-CTNNB1 complex and TBP. Component of the NuA4 histone acetyltransferase complex which contains the catalytic subunit KAT5/TIP60 and the subunits EP400, TRRAP/PAF400, BRD8/SMAP, EPC1, DMAP1/DNMAP1, RUVBL1/TIP49, RUVBL2, ING3, actin, ACTL6A/BAF53A, MORF4L1/MRG15, MORF4L2/MRGX, MRGBP, YEATS4/GAS41, VPS72/YL1 and MEAF6. The NuA4 complex interacts with MYC and the adenovirus E1A protein. RUVBL2 interacts with EP400. Component of a NuA4-related complex which contains EP400, TRRAP/PAF400, SRCAP, BRD8/SMAP, EPC1, DMAP1/DNMAP1, RUVBL1/TIP49, RUVBL2, actin, ACTL6A/BAF53A, VPS72 and YEATS4/GAS41. Interacts with NPAT. Component of the chromatin-remodeling INO80 complex; specifically part of a complex module associated with the helicase ATP-binding and the helicase C-terminal domain of INO80. Component of some MLL1/MLL complex, at least composed of the core components KMT2A/MLL1, ASH2L, HCFC1/HCF1, WDR5 and RBBP5, as well as the facultative components BACC1, CHD8, E2F6, HSP70, INO80C, KANSL1, LAS1L, MAX, MCRS1, MGA, MYST1/MOF, PELP1, PHF20, PRP31, RING2, RUVB1/TIP49A, RUVB2/TIP49B, SENP3, TAF1, TAF4, TAF6, TAF7, TAF9 and TEX10. Interacts with IGHMBP2. Interacts with TELO2. Interacts with HINT1. Component of a SWR1-like complex. Component of the R2TP complex composed at least of RUVBL1, RUVBL2, RPAP3 and PIHD1. Component of the PAQosome complex which is responsible for the biogenesis of several protein complexes and which consists of R2TP complex members RUVBL1, RUVBL2, RPAP3 and PIH1D1, URI complex members PFDN2, PFDN6, PDRG1, UXT and URI1 as well as ASDURF, POLR2E and DNAAF10/WDR92. Interacts with ITFG1. Interacts with ZMYND10. Interacts with WAC; WAC positively regulates MTOR activity by promoting the assembly of the TTT complex composed of TELO2, TTI1 and TTI2 and the RUVBL complex composed of RUVBL1 and RUVBL2 into the TTT-RUVBL complex which leads to the dimerization of the mTORC1 complex and its subsequent activation. Forms a complex with APPL1 and APPL2. Interacts with ZNHIT2 (via HIT-type zinc finger) in the presence of ATP or ADP; shows a stronger interaction in the presence of ADP. The RUVBL1/RUVBL2 complex interacts with ZNHIT1 (via HIT-type zinc finger), ZNHIT3 (via HIT-type zinc finger), ZNHIT6 (via HIT-type zinc finger) and DDX59/ZNHIT5 (via HIT-type zinc finger) in the presence of ADP. Interacts with NOPCHAP1; the interaction is direct and disrupted upon ATP binding. Interacts with SMG1.

It is found in the nucleus matrix. It localises to the nucleus. The protein resides in the nucleoplasm. Its subcellular location is the cytoplasm. The protein localises to the membrane. It is found in the dynein axonemal particle. It carries out the reaction ATP + H2O = ADP + phosphate + H(+). In terms of biological role, possesses single-stranded DNA-stimulated ATPase and ATP-dependent DNA helicase (5' to 3') activity; hexamerization is thought to be critical for ATP hydrolysis and adjacent subunits in the ring-like structure contribute to the ATPase activity. Component of the NuA4 histone acetyltransferase complex which is involved in transcriptional activation of select genes principally by acetylation of nucleosomal histones H4 and H2A. This modification may both alter nucleosome-DNA interactions and promote interaction of the modified histones with other proteins which positively regulate transcription. This complex may be required for the activation of transcriptional programs associated with oncogene and proto-oncogene mediated growth induction, tumor suppressor mediated growth arrest and replicative senescence, apoptosis, and DNA repair. The NuA4 complex ATPase and helicase activities seem to be, at least in part, contributed by the association of RUVBL1 and RUVBL2 with EP400. NuA4 may also play a direct role in DNA repair when recruited to sites of DNA damage. Component of a SWR1-like complex that specifically mediates the removal of histone H2A.Z/H2AZ1 from the nucleosome. Proposed core component of the chromatin remodeling INO80 complex which exhibits DNA- and nucleosome-activated ATPase activity and catalyzes ATP-dependent nucleosome sliding. Plays an essential role in oncogenic transformation by MYC and also modulates transcriptional activation by the LEF1/TCF1-CTNNB1 complex. May also inhibit the transcriptional activity of ATF2. Involved in the endoplasmic reticulum (ER)-associated degradation (ERAD) pathway where it negatively regulates expression of ER stress response genes. May play a role in regulating the composition of the U5 snRNP complex. The protein is RuvB-like 2 (Ruvbl2) of Mus musculus (Mouse).